A 542-amino-acid chain; its full sequence is Doublesex- and mab-3-related transcription factor A2 (542 aa).

The segment at residues C70–R117 is a DNA-binding region (DM). The segment at L201 to P316 is disordered. Residues R314–Q349 form the DMA domain.

This sequence belongs to the DMRT family. As to expression, expressed in testis.

The protein localises to the nucleus. Its function is as follows. May be involved in sexual development. The protein is Doublesex- and mab-3-related transcription factor A2 (DMRTA2) of Homo sapiens (Human).